A 584-amino-acid polypeptide reads, in one-letter code: MFAVVFFILSLMTCQPGVTAQEKVNQRVRRAATPAAVTCQLSNWSEWTDCFPCQDKKYRHRSLLQPNKFGGTICSGDIWDQASCSSSTTCVRQAQCGQDFQCKETGRCLKRHLVCNGDQDCLDGSDEDDCEDVRAIDEDCSQYEPIPGSQKAALGYNILTQEDAQSVYDASYYGGQCETVYNGEWRELRYDSTCERLYYGDDEKYFRKPYNFLKYHFEALADTGISSEFYDNANDLLSKVKKDKSDSFGVTIGIGPAGSPLLVGVGVSHSQDTSFLNELNKYNEKKFIFTRIFTKVQTAHFKMRKDDIMLDEGMLQSLMELPDQYNYGMYAKFINDYGTHYITSGSMGGIYEYILVIDKAKMESLGITSRDITTCFGGSLGIQYEDKINVGGGLSGDHCKKFGGGKTERARKAMAVEDIISRVRGGSSGWSGGLAQNRSTITYRSWGRSLKYNPVVIDFEMQPIHEVLRHTSLGPLEAKRQNLRRALDQYLMEFNACRCGPCFNNGVPILEGTSCRCQCRLGSLGAACEQTQTEGAKADGSWSCWSSWSVCRAGIQERRRECDNPAPQNGGASCPGRKVQTQAC.

Residues 1 to 20 (MFAVVFFILSLMTCQPGVTA) form the signal peptide. A propeptide spanning residues 21 to 30 (QEKVNQRVRR) is cleaved from the precursor. The TSP type-1 1 domain maps to 38-91 (TCQLSNWSEWTDCFPCQDKKYRHRSLLQPNKFGGTICSGDIWDQASCSSSTTCV). Disulfide bonds link Cys39/Cys74, Cys50/Cys84, Cys53/Cys90, Cys96/Cys108, Cys102/Cys121, Cys115/Cys130, and Cys140/Cys177. Trp44 carries a C-linked (Man) tryptophan glycan. The region spanning 94–132 (AQCGQDFQCKETGRCLKRHLVCNGDQDCLDGSDEDDCED) is the LDL-receptor class A domain. Leu113, Asn116, Asp118, Asp120, Asp126, and Glu127 together coordinate Ca(2+). Positions 135–498 (AIDEDCSQYE…QYLMEFNACR (364 aa)) constitute an MACPF domain. Transmembrane regions (beta stranded) follow at residues 248 to 256 (FGVTIGIGP), 259 to 266 (SPLLVGVG), 377 to 384 (GGSLGIQY), and 390 to 395 (VGGGLS). An intrachain disulfide couples Cys375 to Cys399. Asn437 carries N-linked (GlcNAc...) asparagine glycosylation. Intrachain disulfides connect Cys497-Cys544, Cys499-Cys515, Cys502-Cys517, and Cys519-Cys528. In terms of domain architecture, EGF-like spans 499-529 (CGPCFNNGVPILEGTSCRCQCRLGSLGAACE). The TSP type-1 2 domain occupies 539-583 (DGSWSCWSSWSVCRAGIQERRRECDNPAPQNGGASCPGRKVQTQA). Trp542, Trp545, and Trp548 each carry a C-linked (Man) tryptophan glycan. Cystine bridges form between Cys551-Cys584 and Cys562-Cys574. The tract at residues 562-584 (CDNPAPQNGGASCPGRKVQTQAC) is disordered.

Belongs to the complement C6/C7/C8/C9 family. In terms of assembly, heterotrimer of 3 chains: alpha (C8A), beta (C8B) and gamma (C8G); the alpha and gamma chains are disulfide bonded. Component of the membrane attack complex (MAC), composed of complement C5b, C6, C7, C8A, C8B, C8G and multiple copies of the pore-forming subunit C9.

Its subcellular location is the secreted. It is found in the target cell membrane. Membrane attack complex (MAC) assembly is inhibited by CD59, thereby protecting self-cells from damage during complement activation. CD59 acts by binding to the beta-haipins of C8 (C8A and C8B), forming an intermolecular beta-sheet that prevents incorporation of the multiple copies of C9 required for complete formation of the osmolytic pore. MAC assembly is also inhibited by clusterin (CLU) chaperones that inhibit polymerization of C9. Functionally, component of the membrane attack complex (MAC), a multiprotein complex activated by the complement cascade, which inserts into a target cell membrane and forms a pore, leading to target cell membrane rupture and cell lysis. The MAC is initiated by proteolytic cleavage of C5 into complement C5b in response to the classical, alternative, lectin and GZMK complement pathways. The complement pathways consist in a cascade of proteins that leads to phagocytosis and breakdown of pathogens and signaling that strengthens the adaptive immune system. C8A, together with C8B and C8G, inserts into the target membrane, but does not form pores by itself. During MAC assembly, associates with C5b, C6 and C7 to form the C5b8 intermediate complex that inserts into the target membrane and traverses the bilayer increasing membrane rigidity. The sequence is that of Complement component C8 alpha chain from Homo sapiens (Human).